The following is a 463-amino-acid chain: L-seryl-tRNA(Sec) selenium transferase (463 aa).

K295 is modified (N6-(pyridoxal phosphate)lysine).

Belongs to the SelA family. Homodecamer; pentamer of dimers. Binds only one seryl-tRNA(Sec) per dimer. Pyridoxal 5'-phosphate serves as cofactor.

It localises to the cytoplasm. The enzyme catalyses L-seryl-tRNA(Sec) + selenophosphate + H(+) = L-selenocysteinyl-tRNA(Sec) + phosphate. Its pathway is aminoacyl-tRNA biosynthesis; selenocysteinyl-tRNA(Sec) biosynthesis; selenocysteinyl-tRNA(Sec) from L-seryl-tRNA(Sec) (bacterial route): step 1/1. Its function is as follows. Converts seryl-tRNA(Sec) to selenocysteinyl-tRNA(Sec) required for selenoprotein biosynthesis. In Escherichia coli O81 (strain ED1a), this protein is L-seryl-tRNA(Sec) selenium transferase.